We begin with the raw amino-acid sequence, 315 residues long: Shiga-like toxin 1 subunit A (315 aa).

Residues Met-1–Ala-22 form the signal peptide. The A1 stretch occupies residues Lys-23 to Arg-273. Glu-189 is a catalytic residue. A disulfide bond links Cys-264 and Cys-283. The A2 stretch occupies residues Met-274–Ser-315.

It belongs to the ribosome-inactivating protein family. As to quaternary structure, shiga-like toxin contains a single subunit A and five copies of subunit B.

The protein localises to the secreted. The catalysed reaction is Endohydrolysis of the N-glycosidic bond at one specific adenosine on the 28S rRNA.. Its function is as follows. The A subunit is responsible for inhibiting protein synthesis through the catalytic inactivation of 60S ribosomal subunits. After endocytosis, the A subunit is cleaved by furin in two fragments, A1 and A2: A1 is the catalytically active fragment, and A2 is essential for holotoxin assembly with the B subunits. The chain is Shiga-like toxin 1 subunit A (stxA) from Escherichia coli (Bacteriophage H19B).